The following is a 599-amino-acid chain: Subtilisin-like protease 1 (599 aa).

The first 20 residues, 1–20, serve as a signal peptide directing secretion; it reads MRTVFIYACIISLVLRTIPA. A propeptide spans 21–195 (inhibition peptide); the sequence is HNDLMSKEKE…VESDELVGAD (175 aa). N-linked (GlcNAc...) asparagine glycosylation is present at N57. Positions 74–101 form a coiled coil; the sequence is EDAPKEELNKIEMEKKKAEEEAKNSKKK. Residues N123, T126, P128, and G183 each coordinate Ca(2+). N-linked (GlcNAc...) asparagine glycosylation is present at N227. D251 lines the Ca(2+) pocket. In terms of domain architecture, Peptidase S8 spans 257 to 574; it reads QWGLDLARLD…GGYIDILNAV (318 aa). Disulfide bonds link C283–C393 and C372–C389. The active-site Charge relay system is D286. 9 residues coordinate Ca(2+): D295, E306, D314, D315, D316, N318, I320, D322, and D323. N331 is a glycosylation site (N-linked (GlcNAc...) asparagine). The active-site Charge relay system is the H342. I353 is a Ca(2+) binding site. N-linked (GlcNAc...) asparagine glycosylation occurs at N355. Ca(2+) contacts are provided by N356, I358, and V360. Residues N402 and N434 are each glycosylated (N-linked (GlcNAc...) asparagine). Cysteines 435 and 448 form a disulfide. Residue S519 is the Charge relay system of the active site.

This sequence belongs to the peptidase S8 family. Post-translationally, the N-terminal prodomain is cleaved.

It localises to the secreted. The protein localises to the parasitophorous vacuole lumen. Its subcellular location is the cytoplasmic vesicle. The protein resides in the secretory vesicle. The enzyme catalyses Hydrolysis of proteins with broad specificity for peptide bonds, and a preference for a large uncharged residue in P1. Hydrolyzes peptide amides.. Functionally, mediates the proteolytic maturation of serine protease SERA3. Mediates the proteolytic maturation of MSP1, and thereby may prime the parasite cell surface for invasion of fresh erythrocytes. Required for completion of the parasite pre-erythrocytic stages. Required for hepatic schizont development and merozoite formation. Required for the egress of the hepatic merozoites from the parasitophorous vacuole. Required for parasite infectivity during blood stages. Required for male gamete egress. The polypeptide is Subtilisin-like protease 1 (Plasmodium berghei (strain Anka)).